The chain runs to 781 residues: MAAALLLLRALRQSPEPGPWRLWAQLSGRSPGLFSGAGGRRPYVVRGTPIGLAAAGGHTPQSLLLRILTPSFEGVSGLLLKRHIVPSAIRLWQLSGSTLYFNTSGLKQKNKDDDKPKGKAPEDDEEERRRKEREDQMYRERLRTLFIIAIVMSLLNSLSTSGGSISWADFVNEMLAKGEVQRVQVVPESDVVEVYLHPGAVVFGRPRLALMYRMQVANIDKFEEKLRAAEDELNIESKDRIPVSYKRTGFFGNALYALGMTAVGLAILWYVFRLAGMTGREGGFSAFNQLKMARFTIVDGKTGKGVSFQDVAGMHEAKLEVREFVDYLKSPERFLQLGAKVPKGALLLGPPGCGKTLLAKAVATEAQVPFLAMAGPEFVEVIGGLGAARVRSLFKEARARAPCIVYIDEIDAVGKKRSTSMSGFSNTEEEQTLNQLLVEMDGMGTADHVIVLASTNRADVLDNALMRPGRLDRHVFIDLPTLQERREIFEQHLKGLKLTQPSSFYSQRLAELTPGFSGADIANICNEAALHAAREGHTSVHTFNFEYAVERVIAGTAKKSKILSKEEQRVVAFHESGHALVGWLLEHTEAVMKVSIAPRTNAALGFSQMLPRDQYLFTKEQLFERMCMALGGRAAEAISFSRVTSGAQDDLRKVTRIAYSMVKQFGMAPSIGPVSFPEAQEGLVGIGRRPFSQGLQQMMDHEARLLVARAYRHTEKVLLDNLDKLQALANALLEKEVINYEDIEALIGPPPHGPKKMIAPQKWIDAEKEKQASGEEEAPAP.

The transit peptide at 1-43 directs the protein to the mitochondrion; that stretch reads MAAALLLLRALRQSPEPGPWRLWAQLSGRSPGLFSGAGGRRPY. Positions 44–105 are cleaved as a propeptide — removed in mature form; the sequence is VVRGTPIGLA…GSTLYFNTSG (62 aa). The disordered stretch occupies residues 105-134; it reads GLKQKNKDDDKPKGKAPEDDEEERRRKERE. Topologically, residues 106–144 are mitochondrial matrix; sequence LKQKNKDDDKPKGKAPEDDEEERRRKEREDQMYRERLRT. Residues 109 to 134 are compositionally biased toward basic and acidic residues; sequence KNKDDDKPKGKAPEDDEEERRRKERE. Residues 145–165 traverse the membrane as a helical segment; it reads LFIIAIVMSLLNSLSTSGGSI. Topologically, residues 166-248 are mitochondrial intermembrane; sequence SWADFVNEML…DRIPVSYKRT (83 aa). Residues 249-269 form a helical membrane-spanning segment; it reads GFFGNALYALGMTAVGLAILW. Over 270-781 the chain is Mitochondrial matrix; that stretch reads YVFRLAGMTG…ASGEEEAPAP (512 aa). 7 residues coordinate ATP: A312, G352, C353, G354, K355, T356, and L357. At Y505 the chain carries 3'-nitrotyrosine. Residue H574 coordinates Zn(2+). E575 is a catalytic residue. Zn(2+)-binding residues include H578 and D650. An interaction with PPIF region spans residues 701 to 781; it reads HEARLLVARA…ASGEEEAPAP (81 aa).

This sequence in the N-terminal section; belongs to the AAA ATPase family. It in the C-terminal section; belongs to the peptidase M41 family. Forms heterooligomers with AFG3L2; the m-AAA protease is composed of heterohexamers of AFG3L2 and SPG7. Component of the mitochondrial permeability transition pore complex (mPTPC), at least composed of SPG7, VDAC1 and PPIF. Interacts with MAIP1. Zn(2+) is required as a cofactor. In terms of processing, upon import into the mitochondrion, the N-terminal transit peptide is cleaved by the mitochondrial-processing peptidase (MPP) to generate an intermediate form which undergoes a second proteolytic cleavage mediated by proteases AFG3L2 removing an additional N-terminal fragment to generate the proteolytically active mature form.

It localises to the mitochondrion inner membrane. It catalyses the reaction ATP + H2O = ADP + phosphate + H(+). In terms of biological role, catalytic component of the m-AAA protease, a protease that plays a key role in proteostasis of inner mitochondrial membrane proteins, and which is essential for axonal and neuron development. SPG7 possesses both ATPase and protease activities: the ATPase activity is required to unfold substrates, threading them into the internal proteolytic cavity for hydrolysis into small peptide fragments. The m-AAA protease exerts a dual role in the mitochondrial inner membrane: it mediates the processing of specific regulatory proteins and ensures protein quality control by degrading misfolded polypeptides. Mediates protein maturation of the mitochondrial ribosomal subunit MRPL32/bL32m by catalyzing the cleavage of the presequence of MRPL32/bL32m prior to assembly into the mitochondrial ribosome. Acts as a regulator of calcium in neurons by mediating degradation of SMDT1/EMRE before its assembly with the uniporter complex, limiting the availability of SMDT1/EMRE for MCU assembly and promoting efficient assembly of gatekeeper subunits with MCU. Also regulates mitochondrial calcium by catalyzing degradation of MCU. Plays a role in the formation and regulation of the mitochondrial permeability transition pore (mPTP) and its proteolytic activity is dispensable for this function. This chain is Mitochondrial inner membrane m-AAA protease component paraplegin (Spg7), found in Rattus norvegicus (Rat).